The chain runs to 350 residues: Probable arabinogalactan endo-beta-1,4-galactanase A (350 aa).

Positions 1–16 are cleaved as a signal peptide; the sequence is MIYPLLLSALPLLSSA. N-linked (GlcNAc...) asparagine glycosylation is present at Asn128. Catalysis depends on Glu152, which acts as the Proton donor. Glu262 functions as the Nucleophile in the catalytic mechanism.

It belongs to the glycosyl hydrolase 53 family.

The protein localises to the secreted. The catalysed reaction is The enzyme specifically hydrolyzes (1-&gt;4)-beta-D-galactosidic linkages in type I arabinogalactans.. Endogalactanase involved in the degradation of plant cell wall polysaccharides, and more particularly of hairy regions of pectin. The sequence is that of Probable arabinogalactan endo-beta-1,4-galactanase A (galA) from Aspergillus tubingensis.